Reading from the N-terminus, the 101-residue chain is Large ribosomal subunit protein bL28 (101 aa).

Belongs to the bacterial ribosomal protein bL28 family.

The chain is Large ribosomal subunit protein bL28 from Methylorubrum populi (strain ATCC BAA-705 / NCIMB 13946 / BJ001) (Methylobacterium populi).